The following is a 352-amino-acid chain: Holliday junction branch migration complex subunit RuvB (352 aa).

The large ATPase domain (RuvB-L) stretch occupies residues 4–191 (TDKLAAPARV…FGIVARLEFY (188 aa)). Residues leucine 30, arginine 31, glycine 72, lysine 75, threonine 76, threonine 77, 138–140 (EDY), arginine 181, tyrosine 191, and arginine 228 contribute to the ATP site. Position 76 (threonine 76) interacts with Mg(2+). The small ATPAse domain (RuvB-S) stretch occupies residues 192 to 262 (TADELARIVT…MADAALAMLD (71 aa)). The interval 265 to 352 (SVGFDLMDRK…SGASELFGDA (88 aa)) is head domain (RuvB-H). Residues arginine 301, arginine 320, and arginine 325 each coordinate DNA.

Belongs to the RuvB family. As to quaternary structure, homohexamer. Forms an RuvA(8)-RuvB(12)-Holliday junction (HJ) complex. HJ DNA is sandwiched between 2 RuvA tetramers; dsDNA enters through RuvA and exits via RuvB. An RuvB hexamer assembles on each DNA strand where it exits the tetramer. Each RuvB hexamer is contacted by two RuvA subunits (via domain III) on 2 adjacent RuvB subunits; this complex drives branch migration. In the full resolvosome a probable DNA-RuvA(4)-RuvB(12)-RuvC(2) complex forms which resolves the HJ.

It localises to the cytoplasm. It catalyses the reaction ATP + H2O = ADP + phosphate + H(+). In terms of biological role, the RuvA-RuvB-RuvC complex processes Holliday junction (HJ) DNA during genetic recombination and DNA repair, while the RuvA-RuvB complex plays an important role in the rescue of blocked DNA replication forks via replication fork reversal (RFR). RuvA specifically binds to HJ cruciform DNA, conferring on it an open structure. The RuvB hexamer acts as an ATP-dependent pump, pulling dsDNA into and through the RuvAB complex. RuvB forms 2 homohexamers on either side of HJ DNA bound by 1 or 2 RuvA tetramers; 4 subunits per hexamer contact DNA at a time. Coordinated motions by a converter formed by DNA-disengaged RuvB subunits stimulates ATP hydrolysis and nucleotide exchange. Immobilization of the converter enables RuvB to convert the ATP-contained energy into a lever motion, pulling 2 nucleotides of DNA out of the RuvA tetramer per ATP hydrolyzed, thus driving DNA branch migration. The RuvB motors rotate together with the DNA substrate, which together with the progressing nucleotide cycle form the mechanistic basis for DNA recombination by continuous HJ branch migration. Branch migration allows RuvC to scan DNA until it finds its consensus sequence, where it cleaves and resolves cruciform DNA. The sequence is that of Holliday junction branch migration complex subunit RuvB from Cupriavidus necator (strain ATCC 17699 / DSM 428 / KCTC 22496 / NCIMB 10442 / H16 / Stanier 337) (Ralstonia eutropha).